Reading from the N-terminus, the 793-residue chain is Signal transducer and activator of transcription 5A (793 aa).

Residue Tyr90 is modified to Phosphotyrosine. Phosphoserine is present on Ser128. The region spanning 589–686 is the SH2 domain; it reads WNDGAILGFV…EVFAKYYTPV (98 aa). A Phosphotyrosine modification is found at Tyr682. Tyr694 is modified (phosphotyrosine; by JAK2). The segment at 772-793 is disordered; that stretch reads DSLDPRLSPPAGLFTSARSSLS. At Ser779 the chain carries Phosphoserine.

The protein belongs to the transcription factor STAT family. As to quaternary structure, forms a homodimer or a heterodimer with a related family member. Binds NR3C1. Interacts with NCOA1 and SOCS7. Interacts with ERBB4. Interacts with EBF4. In terms of processing, ISGylated. Post-translationally, tyrosine phosphorylated in response to KITLG/SCF, IL2, IL3, IL7, IL15, CSF2/GMCSF, GH1, PRL, EPO and THPO. Activated KIT promotes phosphorylation on tyrosine residues and subsequent translocation to the nucleus. Tyrosine phosphorylated in response to constitutively activated FGFR1, FGFR2, FGFR3 and FGFR4. Tyrosine phosphorylation is required for DNA-binding activity and dimerization. Serine phosphorylation is also required for maximal transcriptional activity. Tyrosine phosphorylated in response to signaling via activated FLT3; wild-type FLT3 results in much weaker phosphorylation than constitutively activated mutant FLT3. Alternatively, can be phosphorylated by JAK2 at Tyr-694. In terms of tissue distribution, expressed in heart, lung, and weakly in muscle.

Its subcellular location is the cytoplasm. The protein localises to the nucleus. Its function is as follows. Carries out a dual function: signal transduction and activation of transcription. Mediates cellular responses to the cytokine KITLG/SCF and other growth factors. May mediate cellular responses to activated FGFR1, FGFR2, FGFR3 and FGFR4. Binds to the GAS element and activates PRL-induced transcription. Regulates the expression of milk proteins during lactation. The chain is Signal transducer and activator of transcription 5A (Stat5a) from Rattus norvegicus (Rat).